The following is a 388-amino-acid chain: AT-rich binding protein (388 aa).

Residues 29–52 (IVCHTCQEELQTQDQFWKHIQDEH) form a C2H2-type 1 zinc finger. 2 stretches are compositionally biased toward low complexity: residues 138–165 (QQHQ…LQQQ) and 249–265 (VSVS…STTP). Disordered stretches follow at residues 138 to 168 (QQHQ…QRDV) and 240 to 265 (PPPP…STTP). C2H2-type zinc fingers lie at residues 321 to 345 (YVCD…RVVH) and 351 to 374 (FNCE…KKKH).

The protein localises to the nucleus. May be a transcription factor for genes having (A+T) stretches in their promoter and/or enhancer regions. Binds to AT rich DNA. This chain is AT-rich binding protein, found in Drosophila melanogaster (Fruit fly).